We begin with the raw amino-acid sequence, 718 residues long: Polyribonucleotide nucleotidyltransferase (718 aa).

Mg(2+) is bound by residues aspartate 491 and aspartate 497. A KH domain is found at 558-617 (PRMLTIKINPEKIRDVIGKGGATIRALTEETGTQIDISDDGTIVIASVDEGQAKEAQRRI). Residues 627–695 (GQVYDGSVLR…EKGRLRLSVK (69 aa)) enclose the S1 motif domain.

It belongs to the polyribonucleotide nucleotidyltransferase family. Mg(2+) is required as a cofactor.

The protein resides in the cytoplasm. The enzyme catalyses RNA(n+1) + phosphate = RNA(n) + a ribonucleoside 5'-diphosphate. Its function is as follows. Involved in mRNA degradation. Catalyzes the phosphorolysis of single-stranded polyribonucleotides processively in the 3'- to 5'-direction. This chain is Polyribonucleotide nucleotidyltransferase, found in Bordetella avium (strain 197N).